The sequence spans 562 residues: NAD-dependent malic enzyme (562 aa).

The Proton donor role is filled by tyrosine 101. Arginine 154 contributes to the NAD(+) binding site. Lysine 172 serves as the catalytic Proton acceptor. Residues glutamate 243, aspartate 244, and aspartate 267 each coordinate a divalent metal cation. Aspartate 267 and asparagine 415 together coordinate NAD(+).

The protein belongs to the malic enzymes family. As to quaternary structure, homotetramer. Mg(2+) is required as a cofactor. Requires Mn(2+) as cofactor.

It catalyses the reaction (S)-malate + NAD(+) = pyruvate + CO2 + NADH. The enzyme catalyses oxaloacetate + H(+) = pyruvate + CO2. The chain is NAD-dependent malic enzyme from Shewanella sp. (strain MR-4).